A 320-amino-acid polypeptide reads, in one-letter code: Beta-carotene ketolase (320 aa).

It carries out the reaction all-trans-beta-carotene + 2 AH2 + 2 O2 = echinenone + 2 A + 3 H2O. It catalyses the reaction echinenone + 2 AH2 + 2 O2 = canthaxanthin + 2 A + 3 H2O. It functions in the pathway carotenoid biosynthesis; astaxanthin biosynthesis. Converts beta-carotene to canthaxanthin via echinenone. This is Beta-carotene ketolase from Haematococcus lacustris (Green alga).